The sequence spans 354 residues: Methylthioribose-1-phosphate isomerase (354 aa).

Residues 58–60 (RGA), Arg101, and Gln204 contribute to the substrate site. Asp245 (proton donor) is an active-site residue. 255 to 256 (NK) is a substrate binding site.

This sequence belongs to the eIF-2B alpha/beta/delta subunits family. MtnA subfamily.

It catalyses the reaction 5-(methylsulfanyl)-alpha-D-ribose 1-phosphate = 5-(methylsulfanyl)-D-ribulose 1-phosphate. Its pathway is amino-acid biosynthesis; L-methionine biosynthesis via salvage pathway; L-methionine from S-methyl-5-thio-alpha-D-ribose 1-phosphate: step 1/6. Catalyzes the interconversion of methylthioribose-1-phosphate (MTR-1-P) into methylthioribulose-1-phosphate (MTRu-1-P). The protein is Methylthioribose-1-phosphate isomerase of Xylella fastidiosa (strain 9a5c).